A 354-amino-acid chain; its full sequence is Serine/threonine-protein kinase-transforming protein mos (354 aa).

The Protein kinase domain maps to 74–350 (VCLMHRLGSG…LLQRDLKAFR (277 aa)). Residues 80-88 (LGSGGFGSV) and Lys-101 contribute to the ATP site. The Proton acceptor role is filled by Asp-209.

This sequence belongs to the protein kinase superfamily. Ser/Thr protein kinase family.

The enzyme catalyses L-seryl-[protein] + ATP = O-phospho-L-seryl-[protein] + ADP + H(+). The catalysed reaction is L-threonyl-[protein] + ATP = O-phospho-L-threonyl-[protein] + ADP + H(+). This is Serine/threonine-protein kinase-transforming protein mos (V-MOS) from Moloney murine sarcoma virus (strain ts110) (MoMSV).